The primary structure comprises 500 residues: ATP synthase subunit alpha (500 aa).

Residue 169–176 (GDRQTGKT) coordinates ATP.

The protein belongs to the ATPase alpha/beta chains family. In terms of assembly, F-type ATPases have 2 components, CF(1) - the catalytic core - and CF(0) - the membrane proton channel. CF(1) has five subunits: alpha(3), beta(3), gamma(1), delta(1), epsilon(1). CF(0) has three main subunits: a(1), b(2) and c(9-12). The alpha and beta chains form an alternating ring which encloses part of the gamma chain. CF(1) is attached to CF(0) by a central stalk formed by the gamma and epsilon chains, while a peripheral stalk is formed by the delta and b chains.

It is found in the cell membrane. The catalysed reaction is ATP + H2O + 4 H(+)(in) = ADP + phosphate + 5 H(+)(out). Produces ATP from ADP in the presence of a proton gradient across the membrane. The alpha chain is a regulatory subunit. This Lactococcus lactis subsp. lactis (strain IL1403) (Streptococcus lactis) protein is ATP synthase subunit alpha.